We begin with the raw amino-acid sequence, 527 residues long: BTB/POZ domain-containing protein At4g01160 (527 aa).

One can recognise a BTB domain in the interval Asn-111 to Ala-180. The BACK domain maps to Val-233–Ile-327.

Its pathway is protein modification; protein ubiquitination. May act as a substrate-specific adapter of an E3 ubiquitin-protein ligase complex (CUL3-RBX1-BTB) which mediates the ubiquitination and subsequent proteasomal degradation of target proteins. In Arabidopsis thaliana (Mouse-ear cress), this protein is BTB/POZ domain-containing protein At4g01160.